A 591-amino-acid chain; its full sequence is DDB1- and CUL4-associated factor 8 (591 aa).

The segment covering 1 to 25 (MSNKRPNTTDGRTDLANGSLSSSPE) has biased composition (polar residues). Residues 1–140 (MSNKRPNTTD…EDWVSSETTA (140 aa)) are disordered. 2 positions are modified to phosphoserine: serine 22 and serine 23. The Nuclear export signal motif lies at 40 to 51 (IEVEASDLSLSL). 2 stretches are compositionally biased toward basic and acidic residues: residues 66-100 (RGTDTESSGEEKDSDSMEDTGHYSINDESRGHGHS) and 118-131 (SRDQDSSDDERALE). Residues serine 100, serine 123, and serine 124 each carry the phosphoserine modification. WD repeat units follow at residues 185 to 224 (GHTGCVNTLHFNQRGTWLASGSDDLKVVVWDWVRRQPVLD), 228 to 269 (GHKS…CCKN), 275 to 315 (QHKG…PASK), 323 to 363 (EKKV…ENEN), 379 to 418 (ESKANITCLVYSHDGTELLASYNDEDIYLFNSSHSDGAQY), 426 to 466 (RNNA…IIQF), and 470 to 509 (DKGGVVNCLEPHPHLPVLATSGLDHDVKIWAPTAEASTEL). Arginine 198 carries the omega-N-methylarginine; by PRMT1 modification. A disordered region spans residues 552-591 (HRRWREPGVGATDADSDESPSSSDTSDEEEGPDRVQCMPS).

Belongs to the WD repeat DCAF8 family. Interacts with DDB1, CUL4A and CUL4B. Interacts with KPNA1, KPNB1 and XPO1. As to expression, expressed in the brain.

It localises to the nucleus. It is found in the cytoplasm. The protein operates within protein modification; protein ubiquitination. Functionally, may function as a substrate receptor for CUL4-DDB1 E3 ubiquitin-protein ligase complex. This is DDB1- and CUL4-associated factor 8 (Dcaf8) from Mus musculus (Mouse).